Consider the following 722-residue polypeptide: Serine/threonine-protein kinase MARK2 (722 aa).

Residues 1 to 46 are disordered; that stretch reads MSSARTPLPTLNERDTEQPTLGHLDSKPSSKSNMLRGRNSATSADE. Residues 27-45 show a composition bias toward polar residues; the sequence is KPSSKSNMLRGRNSATSAD. Ser40 carries the post-translational modification Phosphoserine. Positions 53–304 constitute a Protein kinase domain; the sequence is YRLLKTIGKG…LEQIMKDRWM (252 aa). Residue Thr58 is modified to Phosphothreonine; by autocatalysis. ATP contacts are provided by residues 59–67 and Lys82; that span reads IGKGNFAKV. Residues Ser91, Ser92, and Ser93 each carry the phosphoserine; by CaMK1 modification. Residue Asp175 is the Proton acceptor of the active site. Position 208 is a phosphothreonine; by LKB1 and TAOK1 (Thr208). Ser212 bears the Phosphoserine; by GSK3-beta mark. The residue at position 274 (Ser274) is a Phosphoserine; by autocatalysis. Thr275 carries the post-translational modification Phosphothreonine; by autocatalysis. Phosphothreonine; by CaMK1 is present on Thr294. Residues 323-362 form the UBA domain; that stretch reads YKDPRRTELMVSMGYTREEIQDSLVGQRYNEVMATYLLLG. The disordered stretch occupies residues 373 to 576; sequence ITLKPRPSAD…SQGRRGASGS (204 aa). Ser408 and Ser409 each carry phosphoserine. The span at 417-431 shows a compositional bias: polar residues; sequence PTSNSYSKKTQSNNA. Residues 432-442 are compositionally biased toward basic and acidic residues; the sequence is ENKRPEEETGR. Phosphoserine is present on Ser453. Thr464 is subject to Phosphothreonine. The span at 464 to 483 shows a compositional bias: polar residues; it reads TPTPSTNSVLSTSTNRSRNS. A phosphoserine mark is found at Ser483 and Ser490. Residues 492 to 505 show a composition bias toward polar residues; it reads GQASIQNGKDSTAP. Residues 511–524 are compositionally biased toward low complexity; it reads ASPSAHNISSSSGA. 3 positions are modified to phosphoserine: Ser512, Ser514, and Ser535. A Phosphothreonine; by PKC/PRKCZ modification is found at Thr539. Residues Ser562 and Ser656 each carry the phosphoserine modification. The region spanning 673–722 is the KA1 domain; that stretch reads TPGHENFVQWEMEVCKLPRLSLNGVRFKRISGTSMAFKNIASKIANELKL.

The protein belongs to the protein kinase superfamily. CAMK Ser/Thr protein kinase family. SNF1 subfamily. In terms of assembly, homodimer. Interacts (when phosphorylated at Thr-539) with YWHAZ. Interacts with MTCL1; the interaction is direct and increases MARK2 microtubule-binding ability. Interacts with PAK5; leading to inhibit the protein kinase activity. Interacts with MAPT/TAU. Interacts with YWHAB, YWHAG and YWHAQ. Requires Mg(2+) as cofactor. In terms of processing, autophosphorylated. Phosphorylated at Thr-208 by STK11/LKB1 in complex with STE20-related adapter-alpha (STRADA) pseudo kinase and CAB39. Phosphorylation at Thr-208 by TAOK1 activates the kinase activity, leading to phosphorylation and detachment of MAPT/TAU from microtubules. Phosphorylation at Ser-212 by GSK3-beta (GSK3B) inhibits the kinase activity. Phosphorylation by CaMK1 promotes activity and is required to promote neurite outgrowth. Phosphorylation at Thr-539 by PRKCZ/aPKC in polarized epithelial cells inhibits the kinase activity and promotes binding to 14-3-3 protein YWHAZ, leading to relocation from cell membrane to cytoplasm.

The protein resides in the cell membrane. It is found in the lateral cell membrane. Its subcellular location is the cytoplasm. It localises to the cytoskeleton. The protein localises to the cell projection. The protein resides in the dendrite. The catalysed reaction is L-seryl-[protein] + ATP = O-phospho-L-seryl-[protein] + ADP + H(+). It carries out the reaction L-threonyl-[protein] + ATP = O-phospho-L-threonyl-[protein] + ADP + H(+). The enzyme catalyses L-seryl-[tau protein] + ATP = O-phospho-L-seryl-[tau protein] + ADP + H(+). It catalyses the reaction L-threonyl-[tau protein] + ATP = O-phospho-L-threonyl-[tau protein] + ADP + H(+). Inhibited by hymenialdisine. Activated by phosphorylation on Thr-208 by STK11/LKB1 and TAOK1. Inhibited by phosphorylation at Ser-212 or Thr-539. Inhibited by PAK5; inhibition is independent of the kinase activity of PAK5. Serine/threonine-protein kinase. Involved in cell polarity and microtubule dynamics regulation. Phosphorylates CRTC2/TORC2, DCX, HDAC7, KIF13B, MAP2, MAP4 and RAB11FIP2. Phosphorylates the microtubule-associated protein MAPT/TAU. Plays a key role in cell polarity by phosphorylating the microtubule-associated proteins MAP2, MAP4 and MAPT/TAU at KXGS motifs, causing detachment from microtubules, and their disassembly. Regulates epithelial cell polarity by phosphorylating RAB11FIP2. Involved in the regulation of neuronal migration through its dual activities in regulating cellular polarity and microtubule dynamics, possibly by phosphorylating and regulating DCX. Regulates axogenesis by phosphorylating KIF13B, promoting interaction between KIF13B and 14-3-3 and inhibiting microtubule-dependent accumulation of KIF13B. Also required for neurite outgrowth and establishment of neuronal polarity. Regulates localization and activity of some histone deacetylases by mediating phosphorylation of HDAC7, promoting subsequent interaction between HDAC7 and 14-3-3 and export from the nucleus. Also acts as a positive regulator of the Wnt signaling pathway, probably by mediating phosphorylation of dishevelled proteins (DVL1, DVL2 and/or DVL3). Modulates the developmental decision to build a columnar versus a hepatic epithelial cell apparently by promoting a switch from a direct to a transcytotic mode of apical protein delivery. Essential for the asymmetric development of membrane domains of polarized epithelial cells. This Rattus norvegicus (Rat) protein is Serine/threonine-protein kinase MARK2.